The chain runs to 159 residues: bZIP transcription factor 11 (159 aa).

Residues 1–21 show a composition bias toward low complexity; that stretch reads MESSSSGTTSSTIQTSSGSEE. The interval 1–47 is disordered; that stretch reads MESSSSGTTSSTIQTSSGSEESLMEQRKRKRMLSNRESARRSRMKKQ. Residues 25–88 form the bZIP domain; it reads EQRKRKRMLS…LTVEAENSVL (64 aa). Residues 27-48 are basic motif; the sequence is RKRKRMLSNRESARRSRMKKQK. The tract at residues 53–67 is leucine-zipper; it reads LTAQVNHLKKENTEI.

In terms of assembly, forms heterodimers with BZIP1, BZIP9, BZIP10, BZIP25 and BZIP63. Interacts with ADA2B. Highly expressed in stems and flowers. Expressed in root tips, cotyledons, leaf vasculature, embryos, apical parts of siliques and funiculi.

The protein localises to the nucleus. Its function is as follows. Transcription factor that binds to the DNA sequence 5'-ACTCAT-3' in target gene promoters. Promotes POX1/PRODH1 expression in response to hypoosmolarity stress. Positively regulates the expression of ASN1 and POX2/PRODH2 genes, which are involved in amino acid metabolism. Regulates several metabolic pathways such as myo-inositol, raffinose and trehalose. Regulates several trehalose metabolism genes, including TRE1, TPP5 and TPP6. Mediates recruitment of the histone acetylation machinery to activate auxin-induced transcription. Interacts with ADA2B adapter protein to promote ADA2B-mediated recruitment of SAGA-like histone acetyltransferase complexes to specific auxin-responsive genes. This is bZIP transcription factor 11 from Arabidopsis thaliana (Mouse-ear cress).